A 312-amino-acid polypeptide reads, in one-letter code: Probable phytanoyl-CoA dioxygenase (312 aa).

2-oxoglutarate contacts are provided by residues Lys-84, Met-124, His-142–Asp-144, and Trp-160. Fe cation-binding residues include His-142 and Asp-144. His-231 lines the Fe cation pocket. Ser-233 and Arg-242 together coordinate 2-oxoglutarate.

The protein belongs to the PhyH family. The cofactor is Fe cation. Requires L-ascorbate as cofactor.

The catalysed reaction is phytanoyl-CoA + 2-oxoglutarate + O2 = 2-hydroxyphytanoyl-CoA + succinate + CO2. It functions in the pathway lipid metabolism; fatty acid metabolism. Its function is as follows. Converts phytanoyl-CoA to 2-hydroxyphytanoyl-CoA. In Caenorhabditis elegans, this protein is Probable phytanoyl-CoA dioxygenase.